Consider the following 576-residue polypeptide: 2-succinyl-5-enolpyruvyl-6-hydroxy-3-cyclohexene-1-carboxylate synthase (576 aa).

This sequence belongs to the TPP enzyme family. MenD subfamily. In terms of assembly, homodimer. It depends on Mg(2+) as a cofactor. The cofactor is Mn(2+). Thiamine diphosphate is required as a cofactor.

The catalysed reaction is isochorismate + 2-oxoglutarate + H(+) = 5-enolpyruvoyl-6-hydroxy-2-succinyl-cyclohex-3-ene-1-carboxylate + CO2. Its pathway is quinol/quinone metabolism; 1,4-dihydroxy-2-naphthoate biosynthesis; 1,4-dihydroxy-2-naphthoate from chorismate: step 2/7. It functions in the pathway quinol/quinone metabolism; menaquinone biosynthesis. In terms of biological role, catalyzes the thiamine diphosphate-dependent decarboxylation of 2-oxoglutarate and the subsequent addition of the resulting succinic semialdehyde-thiamine pyrophosphate anion to isochorismate to yield 2-succinyl-5-enolpyruvyl-6-hydroxy-3-cyclohexene-1-carboxylate (SEPHCHC). The protein is 2-succinyl-5-enolpyruvyl-6-hydroxy-3-cyclohexene-1-carboxylate synthase of Aliivibrio fischeri (strain ATCC 700601 / ES114) (Vibrio fischeri).